A 215-amino-acid polypeptide reads, in one-letter code: uncharacterized protein (215 aa).

This is an uncharacterized protein from Archaeoglobus fulgidus (strain ATCC 49558 / DSM 4304 / JCM 9628 / NBRC 100126 / VC-16).